A 302-amino-acid polypeptide reads, in one-letter code: Rab effector Noc2 (302 aa).

The RabBD domain maps to 41–158; that stretch reads QRRSQCLSPG…KRSGAWFYKG (118 aa). An FYVE-type zinc finger spans residues 89 to 146; that stretch reads GNGLSQCLLCGEVLGFLGSSSVFCKDCRKKVCTKCGIEASPGQKRPLWLCKICSEQRE. Positions 95, 98, 112, 115, 120, 123, 138, and 141 each coordinate Zn(2+). Positions 174 to 302 are disordered; the sequence is DPHFRPLPVE…KRHTWATPRY (129 aa). The segment covering 185-197 has biased composition (polar residues); sequence TETQPPSAETSRV. Ser-248 is modified (phosphoserine). Over residues 258 to 269 the composition is skewed to low complexity; that stretch reads SHLSGSQSSLGS.

As to quaternary structure, recruited to dense-core vesicles through specific interaction with RAB27A in endocrine cells. Interacts with RAB3A, RAB3B, RAB3C and RAB3D. Interacts with ZYX. As to expression, highly expressed in pancreatic islets. High to moderate expression in adrenal gland, pituitary gland and ovary.

Its subcellular location is the cytoplasm. It localises to the cytoplasmic vesicle. The protein resides in the secretory vesicle membrane. Functionally, rab GTPase effector involved in the late steps of regulated exocytosis, both in endocrine and exocrine cells. Regulates the exocytosis of dense-core vesicles in neuroendocrine cells through interaction with RAB27A. Acts as a potential RAB3B effector protein in epithelial cells. This is Rab effector Noc2 (Rph3al) from Mus musculus (Mouse).